The sequence spans 271 residues: Mannosyl-3-phosphoglycerate phosphatase (271 aa).

Asp13 serves as the catalytic Nucleophile. The Mg(2+) site is built by Asp13, Asp15, and Asp214.

This sequence belongs to the HAD-like hydrolase superfamily. MPGP family. Mg(2+) is required as a cofactor.

The protein localises to the cytoplasm. It carries out the reaction 2-O-(alpha-D-mannosyl)-3-phosphoglycerate + H2O = (2R)-2-O-(alpha-D-mannosyl)-glycerate + phosphate. This is Mannosyl-3-phosphoglycerate phosphatase from Escherichia coli O81 (strain ED1a).